A 419-amino-acid chain; its full sequence is UDP-N-acetylglucosamine 1-carboxyvinyltransferase (419 aa).

Position 22 to 23 (22 to 23) interacts with phosphoenolpyruvate; that stretch reads KN. Residue R91 participates in UDP-N-acetyl-alpha-D-glucosamine binding. The Proton donor role is filled by C115. C115 carries the 2-(S-cysteinyl)pyruvic acid O-phosphothioketal modification. Residues 120-124, 160-163, D305, and I327 contribute to the UDP-N-acetyl-alpha-D-glucosamine site; these read RPVDL and KVSV.

It belongs to the EPSP synthase family. MurA subfamily.

It localises to the cytoplasm. It carries out the reaction phosphoenolpyruvate + UDP-N-acetyl-alpha-D-glucosamine = UDP-N-acetyl-3-O-(1-carboxyvinyl)-alpha-D-glucosamine + phosphate. Its pathway is cell wall biogenesis; peptidoglycan biosynthesis. With respect to regulation, in vitro inhibited by covalent binding of fosfomycin and the fungal product terreic acid in the presence of substrate UDP-N-acetylglucosamine, with an inactivation rate constant of 130 M(-1)sec(-1) for terreic acid. Its function is as follows. Cell wall formation. Adds enolpyruvyl to UDP-N-acetylglucosamine. Target for the antibiotic fosfomycin. The sequence is that of UDP-N-acetylglucosamine 1-carboxyvinyltransferase from Enterobacter cloacae subsp. cloacae (strain ATCC 13047 / DSM 30054 / NBRC 13535 / NCTC 10005 / WDCM 00083 / NCDC 279-56).